Here is a 199-residue protein sequence, read N- to C-terminus: Recombination protein RecR (199 aa).

The C4-type zinc finger occupies 57-72 (CAECRTFTEEEVCHIC). Residues 81-176 (GQICVVESPA…EASRIAHGVP (96 aa)) enclose the Toprim domain.

It belongs to the RecR family.

May play a role in DNA repair. It seems to be involved in an RecBC-independent recombinational process of DNA repair. It may act with RecF and RecO. This chain is Recombination protein RecR, found in Vibrio parahaemolyticus serotype O3:K6 (strain RIMD 2210633).